The sequence spans 603 residues: Isocitrate dehydrogenase kinase/phosphatase (603 aa).

ATP is bound by residues 327 to 333 (APGIKGL) and Lys-348. Residue Asp-383 is part of the active site.

The protein belongs to the AceK family.

It localises to the cytoplasm. The catalysed reaction is L-seryl-[isocitrate dehydrogenase] + ATP = O-phospho-L-seryl-[isocitrate dehydrogenase] + ADP + H(+). Functionally, bifunctional enzyme which can phosphorylate or dephosphorylate isocitrate dehydrogenase (IDH) on a specific serine residue. This is a regulatory mechanism which enables bacteria to bypass the Krebs cycle via the glyoxylate shunt in response to the source of carbon. When bacteria are grown on glucose, IDH is fully active and unphosphorylated, but when grown on acetate or ethanol, the activity of IDH declines drastically concomitant with its phosphorylation. This chain is Isocitrate dehydrogenase kinase/phosphatase, found in Burkholderia thailandensis (strain ATCC 700388 / DSM 13276 / CCUG 48851 / CIP 106301 / E264).